A 231-amino-acid polypeptide reads, in one-letter code: Sugar fermentation stimulation protein homolog (231 aa).

The protein belongs to the SfsA family.

The sequence is that of Sugar fermentation stimulation protein homolog from Geotalea daltonii (strain DSM 22248 / JCM 15807 / FRC-32) (Geobacter daltonii).